Here is a 155-residue protein sequence, read N- to C-terminus: 2-C-methyl-D-erythritol 2,4-cyclodiphosphate synthase (155 aa).

2 residues coordinate a divalent metal cation: D8 and H10. 4-CDP-2-C-methyl-D-erythritol 2-phosphate is bound by residues 8–10 (DVH) and 34–35 (HS). A divalent metal cation is bound at residue H42. 4-CDP-2-C-methyl-D-erythritol 2-phosphate is bound by residues 56–58 (DIG), 61–65 (FPDKD), 132–135 (TTTE), and R142.

The protein belongs to the IspF family. As to quaternary structure, homotrimer. The cofactor is a divalent metal cation.

The catalysed reaction is 4-CDP-2-C-methyl-D-erythritol 2-phosphate = 2-C-methyl-D-erythritol 2,4-cyclic diphosphate + CMP. It functions in the pathway isoprenoid biosynthesis; isopentenyl diphosphate biosynthesis via DXP pathway; isopentenyl diphosphate from 1-deoxy-D-xylulose 5-phosphate: step 4/6. Involved in the biosynthesis of isopentenyl diphosphate (IPP) and dimethylallyl diphosphate (DMAPP), two major building blocks of isoprenoid compounds. Catalyzes the conversion of 4-diphosphocytidyl-2-C-methyl-D-erythritol 2-phosphate (CDP-ME2P) to 2-C-methyl-D-erythritol 2,4-cyclodiphosphate (ME-CPP) with a corresponding release of cytidine 5-monophosphate (CMP). The polypeptide is 2-C-methyl-D-erythritol 2,4-cyclodiphosphate synthase (Desulfatibacillum aliphaticivorans).